Here is a 510-residue protein sequence, read N- to C-terminus: RanBP-type and C3HC4-type zinc finger-containing protein 1 (510 aa).

The residue at position 1 (Met-1) is an N-acetylmethionine. Positions 1 to 220 are interaction with IRF3; that stretch reads MDEKTKKAEE…PGCEMCCRAR (220 aa). Positions 1 to 270 are interaction with TAB2; sequence MDEKTKKAEE…NYLQHVQLDQ (270 aa). Phosphoserine is present on Ser-50. Positions 55-119 constitute a Ubiquitin-like domain; the sequence is IRLWVSVEDA…DQETLHSHGV (65 aa). Positions 69 to 131 are interaction with RNF31; it reads VTIWLTVRPD…NGDSAYLYLL (63 aa). The segment at 160-192 is disordered; that stretch reads LTLQPRGPLEPGPPKPGVPQEPGRGQPDAVPEP. Positions 167 to 178 are enriched in pro residues; it reads PLEPGPPKPGVP. The segment at 193–222 adopts a RanBP2-type zinc-finger fold; it reads PPVGWQCPGCTFINKPTRPGCEMCCRARPE. Positions 233 to 261 form a coiled coil; that stretch reads DEEERARLAGEEEALRQYQQRKQQQQEGN. Residues 278 to 506 form a TRIAD supradomain region; that stretch reads EPAECPVCYS…VNGIPCHPSC (229 aa). Zn(2+) contacts are provided by Cys-282, Cys-285, Cys-300, His-302, Cys-305, Cys-308, and Cys-323. The RING-type 1 zinc-finger motif lies at 282–332; sequence CPVCYSVLAPGEAVVLRECLHTFCRECLQGTIRNSQEAEVSCPFIDNTYSC. Tyr-330 is modified (phosphotyrosine). The Zn(2+) site is built by Cys-332, Cys-371, Cys-376, Cys-391, Cys-394, Cys-399, Cys-402, His-406, Cys-411, Cys-447, and Cys-450. The segment at 351–411 adopts an IBR-type zinc-finger fold; that stretch reads QRFLDLGISI…CKAIHEQMNC (61 aa). The RING-type 2; atypical zinc-finger motif lies at 447 to 476; that stretch reads CPQCQIVVQKKDGCDWIRCTVCHTEICWVT. Residue Cys-460 is part of the active site. Cys-465 and Cys-468 together coordinate Zn(2+).

It belongs to the RBR family. Component of the LUBAC complex (linear ubiquitin chain assembly complex) which consists of SHARPIN, RBCK1 and RNF31. LUBAC has a MW of approximately 600 kDa suggesting a heteromultimeric assembly of its subunits. Interacts with beta-I-type (PRKCB1) and zeta-type protein kinase C (PRKCZ). Interacts with UBE2L3. Interacts with PRKCH. Associates with the TNF-R1 signaling complex (TNF-RSC) in a stimulation-dependent manner. Interacts with EYA1, TAB2, TAB3, MAP3K7 TRAF6 and RIPK1. Interacts with IRF3. As to quaternary structure, interacts with IREB2 only in iron-rich conditions. In terms of assembly, (Microbial infection) Interacts with hepatitis B virus/HBV protein HBx; this interaction is required to activate transcription of the viral genome. Post-translationally, auto-ubiquitinated. Auto-ubiquitination leads to degradation by the proteasome. Phosphorylated. In vitro, phosphorylation inhibits auto-ubiquitination activity. In terms of processing, (Microbial infection) Ubiquitinated by S.flexneri E3 ubiquitin-protein ligases IpaH1.4 and IpaH2.5, leading to its degradation by the proteasome, thereby preventing formation of the bacterial ubiquitin coat and activation of innate immunity.

It carries out the reaction [E2 ubiquitin-conjugating enzyme]-S-ubiquitinyl-L-cysteine + [acceptor protein]-L-lysine = [E2 ubiquitin-conjugating enzyme]-L-cysteine + [acceptor protein]-N(6)-ubiquitinyl-L-lysine.. Its pathway is protein modification; protein ubiquitination. Its function is as follows. E3 ubiquitin-protein ligase, which accepts ubiquitin from specific E2 ubiquitin-conjugating enzymes, such as UBE2L3/UBCM4, and then transfers it to substrates. Functions as an E3 ligase for oxidized IREB2 and both heme and oxygen are necessary for IREB2 ubiquitination. Promotes ubiquitination of TAB2 and IRF3 and their degradation by the proteasome. Component of the LUBAC complex which conjugates linear ('Met-1'-linked) polyubiquitin chains to substrates and plays a key role in NF-kappa-B activation and regulation of inflammation. LUBAC conjugates linear polyubiquitin to IKBKG and RIPK1 and is involved in activation of the canonical NF-kappa-B and the JNK signaling pathways. Linear ubiquitination mediated by the LUBAC complex interferes with TNF-induced cell death and thereby prevents inflammation. LUBAC is recruited to the TNF-R1 signaling complex (TNF-RSC) following polyubiquitination of TNF-RSC components by BIRC2 and/or BIRC3 and to conjugate linear polyubiquitin to IKBKG and possibly other components contributing to the stability of the complex. The LUBAC complex is also involved in innate immunity by conjugating linear polyubiquitin chains at the surface of bacteria invading the cytosol to form the ubiquitin coat surrounding bacteria. LUBAC is not able to initiate formation of the bacterial ubiquitin coat, and can only promote formation of linear polyubiquitins on pre-existing ubiquitin. The bacterial ubiquitin coat acts as an 'eat-me' signal for xenophagy and promotes NF-kappa-B activation. Together with OTULIN, the LUBAC complex regulates the canonical Wnt signaling during angiogenesis. Binds polyubiquitin of different linkage types. The sequence is that of RanBP-type and C3HC4-type zinc finger-containing protein 1 (RBCK1) from Homo sapiens (Human).